Consider the following 299-residue polypeptide: NADH-cytochrome b5 reductase 2 (299 aa).

Residues 13 to 35 (SFKVLAPFAAAVGSVGIAYQYST) form a helical membrane-spanning segment. One can recognise an FAD-binding FR-type domain in the interval 50–154 (DEWIDLKLAK…KGPVVKWKWE (105 aa)). Position 157-192 (157-192 (QYKSIALIGGGTGITPLYQLMHEITKNPEDKTKVNL)) interacts with FAD.

This sequence belongs to the flavoprotein pyridine nucleotide cytochrome reductase family. It depends on FAD as a cofactor.

The protein localises to the mitochondrion outer membrane. It catalyses the reaction 2 Fe(III)-[cytochrome b5] + NADH = 2 Fe(II)-[cytochrome b5] + NAD(+) + H(+). Its function is as follows. May mediate the reduction of outer membrane cytochrome b5. This Debaryomyces hansenii (strain ATCC 36239 / CBS 767 / BCRC 21394 / JCM 1990 / NBRC 0083 / IGC 2968) (Yeast) protein is NADH-cytochrome b5 reductase 2 (MCR1).